Reading from the N-terminus, the 584-residue chain is (+)-larreatricin hydroxylase, chloroplastic (584 aa).

Residues 1 to 32 (MASLSSQSKLLATPYSFPYHTKPSRVSLRRVS) constitute a chloroplast transit peptide. Residues 33 to 79 (CKASNDNKDKPNDQEKTFSIDRRNMLIGLGGLYGASNVFPSNQSTLA) constitute a thylakoid transit peptide. Disulfide bonds link cysteine 91–cysteine 106 and cysteine 105–cysteine 168. 6 residues coordinate Cu cation: histidine 167, histidine 188, histidine 197, histidine 319, histidine 323, and histidine 353. A cross-link (2'-(S-cysteinyl)-histidine (Cys-His)) is located at residues 171–188 (CNGAYDQVGFPDVNIQVH). Positions 432–584 (RLRSKATTTT…KIEFVRDEED (153 aa)) are cleaved as a propeptide — removed in mature form.

It belongs to the tyrosinase family. Cu(2+) serves as cofactor.

The protein resides in the plastid. It localises to the chloroplast thylakoid lumen. It catalyses the reaction (+)-larreatricin + AH2 + O2 = (+)-3'-hydroxylarreatricin + A + H2O. Its function is as follows. Enantio-specific polyphenol oxidase involved in aromatic ring hydroxylation. Involved in the biosynthesis of the creosote bush 8-8' linked lignans. Has a strong preference for the 3' position of (+)-larreatricin. The protein is (+)-larreatricin hydroxylase, chloroplastic of Larrea tridentata (Creosote bush).